We begin with the raw amino-acid sequence, 328 residues long: 5,10-methylenetetrahydromethanopterin reductase (328 aa).

This sequence belongs to the mer family.

Its subcellular location is the cytoplasm. The catalysed reaction is 5-methyl-5,6,7,8-tetrahydromethanopterin + oxidized coenzyme F420-(gamma-L-Glu)(n) + H(+) = 5,10-methylenetetrahydromethanopterin + reduced coenzyme F420-(gamma-L-Glu)(n). It functions in the pathway one-carbon metabolism; methanogenesis from CO(2); methyl-coenzyme M from 5,10-methylene-5,6,7,8-tetrahydromethanopterin: step 1/2. Its function is as follows. Catalyzes the reversible reduction of methylene-H(4)MPT to methyl-H(4)MPT. The sequence is that of 5,10-methylenetetrahydromethanopterin reductase from Methanosarcina mazei (strain ATCC BAA-159 / DSM 3647 / Goe1 / Go1 / JCM 11833 / OCM 88) (Methanosarcina frisia).